Reading from the N-terminus, the 430-residue chain is MELLHSINDFNEAKQVIAGGVNSPVRAFKSVKGTPPFILKGKGAYLYDVDNNHYIDFVQSWGPLIFGHADEEIEENIINALKKGTSFGAPTELETTLAKEIISCYEGLDKVRLVSSGTEATMSAIRLARAYSQKDDLIKFEGCYHGHSDSLLVKAGSGCATFGSPSSLGVPNDFSKHTLVARYNDLNSTEECFKKGNVGCVIIEPIAGNMGLVPAQKEFLLGLKALCEKYQAVLILDEVMSGFRASLSGSQEFYGVVPDLVTFGKVIGAGLPLACFGGRAEIMDLLSPIGSVYQAGTLSGNPLAVCAGLSALYKIKRDKTLYTRLDALAIRLTQGLQKSAQNYNIALETLNMGSMFGFFFNENAVHDFDDALKSDTEMFAKFHQKMLFKGVYLACSSFETGFICEPMTEEMIDLTIAKADESFDEIIKGV.

N6-(pyridoxal phosphate)lysine is present on Lys-265.

This sequence belongs to the class-III pyridoxal-phosphate-dependent aminotransferase family. HemL subfamily. As to quaternary structure, homodimer. The cofactor is pyridoxal 5'-phosphate.

It localises to the cytoplasm. The enzyme catalyses (S)-4-amino-5-oxopentanoate = 5-aminolevulinate. It participates in porphyrin-containing compound metabolism; protoporphyrin-IX biosynthesis; 5-aminolevulinate from L-glutamyl-tRNA(Glu): step 2/2. The polypeptide is Glutamate-1-semialdehyde 2,1-aminomutase (hemL) (Helicobacter pylori (strain ATCC 700392 / 26695) (Campylobacter pylori)).